A 600-amino-acid polypeptide reads, in one-letter code: Elongation factor 4 (600 aa).

In terms of domain architecture, tr-type G spans 7-189 (SLIRNFSIIA…ALVQRLPAPT (183 aa)). GTP-binding positions include 19-24 (DHGKST) and 136-139 (NKID).

The protein belongs to the TRAFAC class translation factor GTPase superfamily. Classic translation factor GTPase family. LepA subfamily.

It localises to the cell inner membrane. It catalyses the reaction GTP + H2O = GDP + phosphate + H(+). Required for accurate and efficient protein synthesis under certain stress conditions. May act as a fidelity factor of the translation reaction, by catalyzing a one-codon backward translocation of tRNAs on improperly translocated ribosomes. Back-translocation proceeds from a post-translocation (POST) complex to a pre-translocation (PRE) complex, thus giving elongation factor G a second chance to translocate the tRNAs correctly. Binds to ribosomes in a GTP-dependent manner. The chain is Elongation factor 4 from Gluconobacter oxydans (strain 621H) (Gluconobacter suboxydans).